Here is a 346-residue protein sequence, read N- to C-terminus: MMDKFRMIFQFLQSNQESFMNGICGIMALASAQMYSAFDFNCPCLPGYNAAYSAGILLAPPLVLFLLGLVMNNNVSMLAEEWKRPLGRRAKDPAVLRYMFCSMAQRALIAPVVWVAVTLLDGKCFLCAFCTAVPVSALGNGSLAPGLPAPELARLLARVPCPEIYDGDWLLAREVAVRYLRCISQALGWSFVLLTTLLAFVVRSVRPCFTQAAFLKSKYWSHYIDIERKLFDETCTEHAKAFAKVCIQQFFEAMNHDLELGHTHGTLATAPASAAAPTTPDGAEEEREKLRGITDQGTMNRLLTSWHKCKPPLRLGQEEPPLMGNGWAGGGPRPPRKEVATYFSKV.

Topologically, residues 1–21 (MMDKFRMIFQFLQSNQESFMN) are cytoplasmic. The tract at residues 10–37 (QFLQSNQESFMNGICGIMALASAQMYSA) is central pore. Residues 22–37 (GICGIMALASAQMYSA) form a helical membrane-spanning segment. The Extracellular portion of the chain corresponds to 38 to 49 (FDFNCPCLPGYN). Disulfide bonds link C42-C127 and C44-C161. The chain crosses the membrane as a helical span at residues 50 to 72 (AAYSAGILLAPPLVLFLLGLVMN). The phospholipid-binding stretch occupies residues 63–70 (VLFLLGLV). Residues 73–99 (NNVSMLAEEWKRPLGRRAKDPAVLRYM) lie on the Cytoplasmic side of the membrane. The helical transmembrane segment at 100-125 (FCSMAQRALIAPVVWVAVTLLDGKCF) threads the bilayer. C101 carries the S-palmitoyl cysteine lipid modification. A phospholipid-binding region spans residues 105–117 (QRALIAPVVWVAV). Topologically, residues 126 to 180 (LCAFCTAVPVSALGNGSLAPGLPAPELARLLARVPCPEIYDGDWLLAREVAVRYL) are extracellular. Residue N140 is glycosylated (N-linked (GlcNAc...) asparagine). Residues 181 to 206 (RCISQALGWSFVLLTTLLAFVVRSVR) form a helical membrane-spanning segment. The interval 192–202 (VLLTTLLAFVV) is phospholipid-binding. The Cytoplasmic portion of the chain corresponds to 207 to 346 (PCFTQAAFLK…KEVATYFSKV (140 aa)). Residue C208 is the site of S-palmitoyl cysteine attachment. The segment at 313–346 (LRLGQEEPPLMGNGWAGGGPRPPRKEVATYFSKV) is disordered.

It belongs to the CALHM family. In terms of assembly, oligomerizes to form hexamers and octamers. Does not form gap junctions. Associates with CALHM3 as a pore-forming subunit in a hetero-hexameric channel complex. In terms of processing, N-glycosylated. Assembly with CALHM3 is associated with N-glycan remodeling and formation of hybrid complex- and high mannose-type glycochains. This N-glycan processing regulates channel trafficking and gating kinetics. Post-translationally, palmitoylated by ZDHHC3, ZDHHC20 and possibly ZDHHC7. Palmitoylation regulates voltage-dependent gating of the channel by shifting it toward more depolarized potentials. Predominantly expressed in adult brain. Detected also in retinoic acid-differentiated SH-SY5Y cells. Specifically expressed in circumvallate taste bud cells.

It is found in the cell membrane. The protein resides in the endoplasmic reticulum membrane. Its subcellular location is the basolateral cell membrane. It catalyses the reaction ATP(in) = ATP(out). It carries out the reaction Ca(2+)(in) = Ca(2+)(out). The enzyme catalyses Mg(2+)(in) = Mg(2+)(out). The catalysed reaction is Na(+)(in) = Na(+)(out). It catalyses the reaction K(+)(in) = K(+)(out). It carries out the reaction Li(+)(in) = Li(+)(out). The enzyme catalyses Rb(+)(in) = Rb(+)(out). The catalysed reaction is Cs(+)(in) = Cs(+)(out). It catalyses the reaction chloride(in) = chloride(out). With respect to regulation, regulated by membrane voltage and extracellular Ca(2+). Inhibited by Gd(3+), ruthenium red, and Zn(2+) and partially inhibited by 2-aminoethoxydiphenyl borate. Pore-forming subunit of gustatory voltage-gated ion channels required for sensory perception of sweet, bitter and umami tastes. With CALHM3 forms a fast-activating voltage-gated ATP-release channel in type II taste bud cells, ATP acting as a neurotransmitter to activate afferent neural gustatory pathways. Acts both as a voltage-gated and calcium-activated ion channel: mediates neuronal excitability in response to membrane depolarization and low extracellular Ca(2+) concentration. Has poor ion selectivity and forms a wide pore (around 14 Angstroms) that mediates permeation of small ions including Ca(2+), Na(+), K(+) and Cl(-), as well as larger ions such as ATP(4-). Mediates Ca(2+) influx and downstream activation of the ERK1 and ERK2 cascade in neurons. Triggers endoplasmic reticulum stress by reducing the Ca(2+) content of the endoplasmic reticulum. May indirectly control amyloid precursor protein (APP) proteolysis and aggregated amyloid-beta (Abeta) peptides levels in a Ca(2+)-dependent manner. This Homo sapiens (Human) protein is Calcium homeostasis modulator protein 1.